The primary structure comprises 320 residues: Protein rlx (320 aa).

This protein is probably required for relaxation complex formation and plasmid mobilization by conjugative plasmids. The polypeptide is Protein rlx (rlx) (Staphylococcus aureus).